Reading from the N-terminus, the 247-residue chain is Trypsin-4 (247 aa).

An N-terminal signal peptide occupies residues 1-15 (MKISIFFAFLGAAVA). The propeptide at 16-23 (LPVNDDDK) is activation peptide. The region spanning 24–245 (IVGGYTCPKH…YLSWIQETMA (222 aa)) is the Peptidase S1 domain. 6 cysteine pairs are disulfide-bonded: C30-C161, C49-C65, C133-C234, C140-C207, C172-C186, and C197-C221. The active-site Charge relay system is the H64. E76, N78, V81, and E86 together coordinate Ca(2+). Residue D108 is the Charge relay system of the active site. Residue S201 is the Charge relay system of the active site.

This sequence belongs to the peptidase S1 family. The cofactor is Ca(2+). Proteolytically cleaved and activated by an autocatalytic mechanism. Cleavage by CTRC inhibits autoactivation.

Its subcellular location is the secreted. It is found in the extracellular space. The catalysed reaction is Preferential cleavage: Arg-|-Xaa, Lys-|-Xaa.. Activated by autocatalytic cleavage. Cleavage by CTRC inhibits autoactivation. In terms of biological role, serine protease capable of autoactivation. The polypeptide is Trypsin-4 (Rattus norvegicus (Rat)).